Reading from the N-terminus, the 475-residue chain is Ankyrin repeat, SAM and basic leucine zipper domain-containing protein 1 (475 aa).

Positions 1–24 (MAASALRGPPVAGGGESSESEDDG) are disordered. Ser17, Ser18, and Ser20 each carry phosphoserine. 6 ANK repeats span residues 45–74 (EKKEKFKKAMTIGDVSLVQELLDSGISVDS), 78–107 (YGWTPLMYAASVANAELVRVLLDRGANASF), 110–144 (DKQSILITACSAHGSEEQILKCVELLLSRNADPNV), 148–177 (RLMTPIMYAARDGHTQVVALLVAHGAEVNT), 181–210 (NGYTALTWAARQGHKNIVLKLLELGANKML), and 214–243 (DGKMPSEIAKRNKHHEIFNLLSFTLNPLEG). Residues 272–334 (SYTAFGDLEV…KILAALKELQ (63 aa)) form the SAM domain.

Interacts with DDX4, PIWIL1, RANBP9 and TDRD1.

The protein resides in the cytoplasm. Its function is as follows. Plays a central role during spermatogenesis by repressing transposable elements and preventing their mobilization, which is essential for the germline integrity. Acts via the piRNA metabolic process, which mediates the repression of transposable elements during meiosis by forming complexes composed of piRNAs and Piwi proteins and governs the methylation and subsequent repression of transposons. Its association with pi-bodies suggests a participation in the primary piRNAs metabolic process. Required prior to the pachytene stage to facilitate the production of multiple types of piRNAs, including those associated with repeats involved in the regulation of retrotransposons. May act by mediating protein-protein interactions during germ cell maturation. This is Ankyrin repeat, SAM and basic leucine zipper domain-containing protein 1 (ASZ1) from Gorilla gorilla gorilla (Western lowland gorilla).